We begin with the raw amino-acid sequence, 1106 residues long: Putative pre-mRNA-splicing factor ATP-dependent RNA helicase DHX16 (1106 aa).

3 disordered regions span residues K73–K100, D120–R286, and Y366–N394. Residues T78 to S94 show a composition bias toward low complexity. Positions K138–K155 are enriched in basic residues. A compositionally biased stretch (basic and acidic residues) spans D156–N167. Over residues N189–N201 the composition is skewed to low complexity. Over residues R232–T283 the composition is skewed to basic and acidic residues. A Helicase ATP-binding domain is found at I477 to P640. G490–T497 is a binding site for ATP. Positions D587–H590 match the DEAH box motif. The region spanning T665–G838 is the Helicase C-terminal domain.

It belongs to the DEAD box helicase family. DEAH subfamily. DDX16/PRP8 sub-subfamily. Component of pre-catalytic spliceosome complexes.

The protein resides in the nucleus. Its subcellular location is the nucleoplasm. It carries out the reaction ATP + H2O = ADP + phosphate + H(+). Its function is as follows. Required for pre-mRNA splicing as component of the spliceosome. Contributes to pre-mRNA splicing after spliceosome formation and prior to the first transesterification reaction. This is Putative pre-mRNA-splicing factor ATP-dependent RNA helicase DHX16 (dhx16) from Dictyostelium discoideum (Social amoeba).